The primary structure comprises 357 residues: Protein RecA (357 aa).

ATP is bound at residue 69–76 (GPESSGKT). The disordered stretch occupies residues 337–357 (SANSVAKNNEDDEDEDVEEEE). A compositionally biased stretch (acidic residues) spans 346–357 (EDDEDEDVEEEE).

This sequence belongs to the RecA family.

The protein resides in the cytoplasm. Functionally, can catalyze the hydrolysis of ATP in the presence of single-stranded DNA, the ATP-dependent uptake of single-stranded DNA by duplex DNA, and the ATP-dependent hybridization of homologous single-stranded DNAs. It interacts with LexA causing its activation and leading to its autocatalytic cleavage. The chain is Protein RecA from Nostoc sp. (strain PCC 7120 / SAG 25.82 / UTEX 2576).